Here is a 404-residue protein sequence, read N- to C-terminus: Argininosuccinate synthase (404 aa).

ATP is bound by residues 12-20 and alanine 39; that span reads AYSGGLDTS. L-citrulline contacts are provided by tyrosine 91 and serine 96. Position 121 (glycine 121) interacts with ATP. Residues threonine 123, asparagine 127, and aspartate 128 each contribute to the L-aspartate site. Position 127 (asparagine 127) interacts with L-citrulline. Residues arginine 131, serine 180, serine 189, glutamate 265, and tyrosine 277 each contribute to the L-citrulline site.

Belongs to the argininosuccinate synthase family. Type 1 subfamily. Homotetramer.

The protein localises to the cytoplasm. The catalysed reaction is L-citrulline + L-aspartate + ATP = 2-(N(omega)-L-arginino)succinate + AMP + diphosphate + H(+). It participates in amino-acid biosynthesis; L-arginine biosynthesis; L-arginine from L-ornithine and carbamoyl phosphate: step 2/3. The chain is Argininosuccinate synthase from Vibrio campbellii (strain ATCC BAA-1116).